Here is a 193-residue protein sequence, read N- to C-terminus: Xanthine phosphoribosyltransferase (193 aa).

Residues leucine 20 and threonine 27 each contribute to the xanthine site. 128-132 (ANGQA) is a binding site for 5-phospho-alpha-D-ribose 1-diphosphate. Lysine 156 serves as a coordination point for xanthine.

The protein belongs to the purine/pyrimidine phosphoribosyltransferase family. Xpt subfamily. Homodimer.

It is found in the cytoplasm. The enzyme catalyses XMP + diphosphate = xanthine + 5-phospho-alpha-D-ribose 1-diphosphate. The protein operates within purine metabolism; XMP biosynthesis via salvage pathway; XMP from xanthine: step 1/1. Its function is as follows. Converts the preformed base xanthine, a product of nucleic acid breakdown, to xanthosine 5'-monophosphate (XMP), so it can be reused for RNA or DNA synthesis. This Streptococcus equi subsp. equi (strain 4047) protein is Xanthine phosphoribosyltransferase.